We begin with the raw amino-acid sequence, 841 residues long: Nuclear RNA export factor 2 (841 aa).

An RNA-binding unit probably involved in Piwi-dependent recruitment and single-stranded RNA-PPNP complex formation region spans residues 1–285 (MPNQMRVLDF…NFELVDGKPF (285 aa)). 3 LRR repeats span residues 200 to 221 (RLNG…TLLA), 224 to 245 (DYAL…CRAL), and 249 to 270 (RARE…PANI). The tract at residues 286-553 (NMLHKIFSPL…EYVRAVKEVF (268 aa)) is necessary for silencing function. The RRM domain maps to 325–408 (WHAFMIPDPS…IFRYYLRMNV (84 aa)). 3 LRR repeats span residues 475-496 (TCSE…HVLG), 500-521 (CLRA…HSLG), and 524-545 (PLKS…PSEY). The 174-residue stretch at 585-758 (LVGAFLENYL…LKIANERLHI (174 aa)) folds into the NTF2 domain. Residues 788-841 (DVKDHKLLLFQEVTGLISTWVTSIVEEADWDFERALKLFIQKNADHEIPDLAFA) enclose the TAP-C domain.

Belongs to the NXF family. As to quaternary structure, in the ovaries, part of a complex composed of at least Panx, nxf2, piwi and Nxt1. The complex is knowns as Panx-induced cotranscriptional silencing (PICTS) complex, Panx-nxf2-dependent TAP/p15 silencing (Pandas complex), SFiNX (silencing factor interacting nuclear export variant) or piwi-Panx-nxf2-p15 (PPNP) complex. Interacts (via TAP-C domain) with Panx (via NIR region); the interaction is direct. Interacts (via NTF2 domain) with Nxt1; the interaction is direct and prevents Nxt1 binding to nucleoporins. Interacts with sbr/Nxf1. In terms of tissue distribution, expressed in female gonads (at protein level). Expressed ubiquitously.

It is found in the cytoplasm. The protein localises to the nucleus. The protein resides in the nucleoplasm. Its function is as follows. May be involved in the export of mRNA from the nucleus to the cytoplasm. In the ovaries, forms a complex with nxf2, piwi and Nxt1 which acts as effectors of cotranscriptional transposon silencing. On recruitment to a target transcript, interacts with single stranded RNA, thereby anchoring the complex via the nascent target transcript to chromatin and allowing Panx to recruit silencing effectors to establishing repressive heterochromatin at transposon loci. Does not affect piRNA biogenesis. The interaction with Panx stabilizes the nuclear protein complex. Does not bind nucleoporins, but regulates sbr/Nxf1 binding to nucleoporins and, indirectly, transposon exports. This Drosophila melanogaster (Fruit fly) protein is Nuclear RNA export factor 2 (nxf2).